A 167-amino-acid polypeptide reads, in one-letter code: Large ribosomal subunit protein uL10 (167 aa).

The protein belongs to the universal ribosomal protein uL10 family. As to quaternary structure, part of the ribosomal stalk of the 50S ribosomal subunit. The N-terminus interacts with L11 and the large rRNA to form the base of the stalk. The C-terminus forms an elongated spine to which L12 dimers bind in a sequential fashion forming a multimeric L10(L12)X complex.

Its function is as follows. Forms part of the ribosomal stalk, playing a central role in the interaction of the ribosome with GTP-bound translation factors. This is Large ribosomal subunit protein uL10 from Flavobacterium johnsoniae (strain ATCC 17061 / DSM 2064 / JCM 8514 / BCRC 14874 / CCUG 350202 / NBRC 14942 / NCIMB 11054 / UW101) (Cytophaga johnsonae).